A 138-amino-acid chain; its full sequence is Small ribosomal subunit protein uS11c (138 aa).

The interval 1 to 23 (MAKPILRIGSRKNTRSGSRKNVR) is disordered. Residues 9-23 (GSRKNTRSGSRKNVR) are compositionally biased toward basic residues.

Belongs to the universal ribosomal protein uS11 family. As to quaternary structure, part of the 30S ribosomal subunit.

Its subcellular location is the plastid. It is found in the chloroplast. The polypeptide is Small ribosomal subunit protein uS11c (Crucihimalaya wallichii (Rock-cress)).